The sequence spans 1485 residues: Formin BNR1 (1485 aa).

Disordered stretches follow at residues 65 to 88, 226 to 248, and 549 to 575; these read HLPPPRLDTDSESVSSRTSSPTLH, HDDSSTSKLSIESGGSSGAPTET, and ANTSLEEDELTPELEDNLSGTESSFDE. Positions 110–636 constitute a GBD/FH3 domain; that stretch reads NQIPPEEIVD…HVTNESRVIG (527 aa). Residues 231–248 are compositionally biased toward polar residues; sequence TSKLSIESGGSSGAPTET. Positions 553-564 are enriched in acidic residues; it reads LEEDELTPELED. Residues 660 to 734 adopt a coiled-coil conformation; the sequence is ARRAVAESKM…EQLQSPNNTA (75 aa). The tract at residues 746–874 is disordered; the sequence is GNGTVASLKD…GFMNASAPPP (129 aa). The FH2 domain occupies 953–1368; sequence VVPSIRPKNK…YEIRKKILED (416 aa). Coiled-coil stretches lie at residues 1240 to 1312 and 1351 to 1382; these read HNIS…GELN and QREEEQRTYEIRKKILEDKIAKKEKLKEESAE. Residues 1447–1471 are disordered; that stretch reads LKRRMTTRKRTTDGETSPKSEQFMS.

Belongs to the formin homology family. BNI1 subfamily. As to quaternary structure, interacts with IQG1.

The protein localises to the bud neck. It is found in the cell septum. Functionally, may organize microtubules by mediating spindle positioning and movement in the budding process. Required for cytokinesis and the maintenance of polarized hyphal growth. In Candida albicans (strain SC5314 / ATCC MYA-2876) (Yeast), this protein is Formin BNR1 (BNR1).